Consider the following 161-residue polypeptide: Nucleotide-binding protein Bcenmc03_2579 (161 aa).

The protein belongs to the YajQ family.

Its function is as follows. Nucleotide-binding protein. The sequence is that of Nucleotide-binding protein Bcenmc03_2579 from Burkholderia orbicola (strain MC0-3).